Here is a 106-residue protein sequence, read N- to C-terminus: L-rhamnose mutarotase (106 aa).

Y20 provides a ligand contact to substrate. H24 acts as the Proton donor in catalysis. Substrate-binding positions include Y43 and 78-79; that span reads WW.

Belongs to the rhamnose mutarotase family. In terms of assembly, homodimer.

The protein resides in the cytoplasm. It carries out the reaction alpha-L-rhamnose = beta-L-rhamnose. The protein operates within carbohydrate metabolism; L-rhamnose metabolism. In terms of biological role, involved in the anomeric conversion of L-rhamnose. This Leptothrix cholodnii (strain ATCC 51168 / LMG 8142 / SP-6) (Leptothrix discophora (strain SP-6)) protein is L-rhamnose mutarotase.